Consider the following 432-residue polypeptide: Anaerobic glycerol-3-phosphate dehydrogenase subunit B (432 aa).

The protein belongs to the anaerobic G-3-P dehydrogenase subunit B family. In terms of assembly, composed of a catalytic GlpA/B dimer and of membrane bound GlpC. Requires FMN as cofactor.

The catalysed reaction is a quinone + sn-glycerol 3-phosphate = dihydroxyacetone phosphate + a quinol. The protein operates within polyol metabolism; glycerol degradation via glycerol kinase pathway; glycerone phosphate from sn-glycerol 3-phosphate (anaerobic route): step 1/1. In terms of biological role, conversion of glycerol 3-phosphate to dihydroxyacetone. Uses fumarate or nitrate as electron acceptor. The chain is Anaerobic glycerol-3-phosphate dehydrogenase subunit B from Haemophilus influenzae (strain PittGG).